Consider the following 78-residue polypeptide: ATP synthase subunit c (78 aa).

A run of 2 helical transmembrane segments spans residues 16 to 36 (LATL…ASFL) and 57 to 77 (MALA…ILFV).

The protein belongs to the ATPase C chain family. F-type ATPases have 2 components, F(1) - the catalytic core - and F(0) - the membrane proton channel. F(1) has five subunits: alpha(3), beta(3), gamma(1), delta(1), epsilon(1). F(0) has three main subunits: a(1), b(2) and c(10-14). The alpha and beta chains form an alternating ring which encloses part of the gamma chain. F(1) is attached to F(0) by a central stalk formed by the gamma and epsilon chains, while a peripheral stalk is formed by the delta and b chains.

Its subcellular location is the cell inner membrane. Functionally, f(1)F(0) ATP synthase produces ATP from ADP in the presence of a proton or sodium gradient. F-type ATPases consist of two structural domains, F(1) containing the extramembraneous catalytic core and F(0) containing the membrane proton channel, linked together by a central stalk and a peripheral stalk. During catalysis, ATP synthesis in the catalytic domain of F(1) is coupled via a rotary mechanism of the central stalk subunits to proton translocation. In terms of biological role, key component of the F(0) channel; it plays a direct role in translocation across the membrane. A homomeric c-ring of between 10-14 subunits forms the central stalk rotor element with the F(1) delta and epsilon subunits. The sequence is that of ATP synthase subunit c from Hyphomonas neptunium (strain ATCC 15444).